We begin with the raw amino-acid sequence, 692 residues long: Protein arginine N-methyltransferase 7 (692 aa).

2 consecutive SAM-dependent MTase PRMT-type domains span residues 14–345 (SLEW…YCVW) and 358–684 (SAYQ…ITME). Residue R32 is modified to Omega-N-methylarginine. Catalysis depends on residues E144 and E153.

It belongs to the class I-like SAM-binding methyltransferase superfamily. Protein arginine N-methyltransferase family. PRMT7 subfamily. As to quaternary structure, homodimer and heterodimer. Interacts with PRMT5 and SNRPD3. Interacts with CTCFL.

The protein resides in the cytoplasm. The protein localises to the cytosol. Its subcellular location is the nucleus. It carries out the reaction L-arginyl-[protein] + S-adenosyl-L-methionine = N(omega)-methyl-L-arginyl-[protein] + S-adenosyl-L-homocysteine + H(+). Functionally, arginine methyltransferase that can both catalyze the formation of omega-N monomethylarginine (MMA) and symmetrical dimethylarginine (sDMA), with a preference for the formation of MMA. Specifically mediates the symmetrical dimethylation of arginine residues in the small nuclear ribonucleoproteins Sm D1 (SNRPD1) and Sm D3 (SNRPD3); such methylation being required for the assembly and biogenesis of snRNP core particles. Specifically mediates the symmetric dimethylation of histone H4 'Arg-3' to form H4R3me2s. Plays a role in gene imprinting by being recruited by CTCFL at the H19 imprinted control region (ICR) and methylating histone H4 to form H4R3me2s, possibly leading to recruit DNA methyltransferases at these sites. May also play a role in embryonic stem cell (ESC) pluripotency. Also able to mediate the arginine methylation of histone H2A and myelin basic protein (MBP) in vitro; the relevance of such results is however unclear in vivo. The polypeptide is Protein arginine N-methyltransferase 7 (Prmt7) (Mus musculus (Mouse)).